The primary structure comprises 2254 residues: Acetyl-CoA carboxylase 1 (2254 aa).

A Biotin carboxylation domain is found at 36 to 543; it reads PIHSILIANN…HTGWLDSRIA (508 aa). One can recognise an ATP-grasp domain in the interval 189-381; the sequence is NSNLVTIPEE…LPAAQVAVGM (193 aa). 215–272 contributes to the ATP binding site; that stretch reads CQVVGYPAMIKASWGGGGKGIRKVHNDDEVRALFKQVQGEVPGSPIFIMKVASQSRHL. Mg(2+) contacts are provided by glutamate 338, glutamate 352, and asparagine 354. Mn(2+)-binding residues include glutamate 338, glutamate 352, and asparagine 354. Arginine 356 is a catalytic residue. The Biotinyl-binding domain occupies 670-744; sequence LQNDHDPSKL…QAGELIANLD (75 aa). An N6-biotinyllysine modification is found at lysine 711. The residue at position 1031 (threonine 1031) is a Phosphothreonine. At serine 1192 the chain carries Phosphoserine. One can recognise a CoA carboxyltransferase N-terminal domain in the interval 1492–1831; the sequence is QYKPLGYLDR…YVGGPLPVLA (340 aa). The interval 1492 to 2150 is carboxyltransferase; it reads QYKPLGYLDR…ESSLVKNVRE (659 aa). Positions 1740, 2041, and 2043 each coordinate CoA. A CoA carboxyltransferase C-terminal domain is found at 1835 to 2150; that stretch reads PPERIVEYVP…ESSLVKNVRE (316 aa).

In terms of assembly, homodimer. Requires biotin as cofactor. Mg(2+) serves as cofactor. It depends on Mn(2+) as a cofactor. In terms of tissue distribution, expressed in roots, trichomes, epidermal leaf cells, siliques, petals, anthers, and seeds.

The protein resides in the cytoplasm. Its subcellular location is the cytosol. The enzyme catalyses hydrogencarbonate + acetyl-CoA + ATP = malonyl-CoA + ADP + phosphate + H(+). It catalyses the reaction N(6)-biotinyl-L-lysyl-[protein] + hydrogencarbonate + ATP = N(6)-carboxybiotinyl-L-lysyl-[protein] + ADP + phosphate + H(+). It functions in the pathway lipid metabolism; malonyl-CoA biosynthesis; malonyl-CoA from acetyl-CoA: step 1/1. Its function is as follows. Multifunctional enzyme that catalyzes the carboxylation of acetyl-CoA, forming malonyl-CoA, which is used in the plastid for fatty acid synthesis and in the cytosol in various biosynthetic pathways including fatty acid elongation. Required for very long chain fatty acids elongation. Necessary for embryo and plant development. Plays a central function in embryo morphogenesis, especially in apical meristem development. Involved in cell proliferation and tissue patterning. May act as a repressor of cytokinin response. The protein is Acetyl-CoA carboxylase 1 (ACC1) of Arabidopsis thaliana (Mouse-ear cress).